Reading from the N-terminus, the 57-residue chain is DELTA-limacoditoxin(2)-Dv11 (57 aa).

The N-terminal stretch at 1–24 (MKFAKTFLLLFVVLLLLSIVMAEP) is a signal peptide.

Belongs to the limacoditoxin-2 (cecropin-like) family. Expressed by the venom secretory cell of the spine. The spine is a cuticular structure containing a single large nucleated venom-secreting cell at its base. It is an independent unit capable of producing, storing and injecting venom. On the back of D.vulnerans caterpillars, spines are grouped together by 50 to 100 to form scoli, of which there are eight in D.vulnerans.

The protein resides in the secreted. In terms of biological role, peptide that induces pain in mammals and has insecticidal, antibacterial and antiparasitic activities. Induces partially reversible paralysis in D.melanogaster when tested at high doses. Shows a moderate antiparasitic activity against the major pathogenic nematode of ruminants (H.contortus, EC(50)=30.5 uM). Has potent or moderate antibacterial activities against A.baumannii (MIC&lt;0.25 ug/mL) and S.aureus (MIC=16 ug/mL). Has no activity on the other bacteria tested, nor on the fungus C.albicans. Strongly induces the increase of intracellular calcium in mice DRG neurons, which is a proxy for neuronal activation that would occur during nociception. This increase is due to influx of extracellular calcium, suggesting that the peptide forms pore or channel in neuronal cell membranes. In addition, intraplantar injection in mice provokes nocifensive behavior, suggesting a pain-inducing activity. The sequence is that of DELTA-limacoditoxin(2)-Dv11 from Doratifera vulnerans (Mottled cup moth).